The primary structure comprises 228 residues: Cytidylate kinase (228 aa).

17–25 (GPTASGKGT) contacts ATP.

This sequence belongs to the cytidylate kinase family. Type 1 subfamily.

The protein localises to the cytoplasm. It carries out the reaction CMP + ATP = CDP + ADP. The catalysed reaction is dCMP + ATP = dCDP + ADP. The chain is Cytidylate kinase from Burkholderia ambifaria (strain MC40-6).